Consider the following 267-residue polypeptide: Indole-3-glycerol phosphate synthase (267 aa).

Belongs to the TrpC family.

It carries out the reaction 1-(2-carboxyphenylamino)-1-deoxy-D-ribulose 5-phosphate + H(+) = (1S,2R)-1-C-(indol-3-yl)glycerol 3-phosphate + CO2 + H2O. The protein operates within amino-acid biosynthesis; L-tryptophan biosynthesis; L-tryptophan from chorismate: step 4/5. In Dichelobacter nodosus (strain VCS1703A), this protein is Indole-3-glycerol phosphate synthase.